The primary structure comprises 245 residues: GATA zinc finger domain-containing protein 1 (245 aa).

A GATA-type zinc finger spans residues 9-33 (CSMCKTNTSSMWKKGSQGEILCNNC). Residues 39 to 70 (TAAGGNNNNNSSSSTSGSSSYTGTTFASTSTS) are compositionally biased toward low complexity. The segment at 39–110 (TAAGGNNNNN…PAAEKKVSTK (72 aa)) is disordered. Residues 71–80 (QQSNGGNTKQ) show a composition bias toward polar residues.

It localises to the nucleus. Its function is as follows. Component of some chromatin complex recruited to chromatin sites methylated 'Lys-4' of histone H3 (H3K4me), with a preference for trimethylated form (H3K4me3). This Xenopus laevis (African clawed frog) protein is GATA zinc finger domain-containing protein 1 (gatad1).